Reading from the N-terminus, the 205-residue chain is Holliday junction branch migration complex subunit RuvA (205 aa).

The segment at 1 to 65 (MIAKLKGILD…EDRIHLFGFL (65 aa)) is domain I. Positions 66 to 144 (DNTEKVAFNM…NINTIANNTS (79 aa)) are domain II. The flexible linker stretch occupies residues 145–153 (LATLSTDSN). The tract at residues 154–205 (THDNILSDAITALIALGISRAEATQILSDIYALSPSISVNELVRTALQRRAK) is domain III.

It belongs to the RuvA family. Homotetramer. Forms an RuvA(8)-RuvB(12)-Holliday junction (HJ) complex. HJ DNA is sandwiched between 2 RuvA tetramers; dsDNA enters through RuvA and exits via RuvB. An RuvB hexamer assembles on each DNA strand where it exits the tetramer. Each RuvB hexamer is contacted by two RuvA subunits (via domain III) on 2 adjacent RuvB subunits; this complex drives branch migration. In the full resolvosome a probable DNA-RuvA(4)-RuvB(12)-RuvC(2) complex forms which resolves the HJ.

The protein resides in the cytoplasm. Its function is as follows. The RuvA-RuvB-RuvC complex processes Holliday junction (HJ) DNA during genetic recombination and DNA repair, while the RuvA-RuvB complex plays an important role in the rescue of blocked DNA replication forks via replication fork reversal (RFR). RuvA specifically binds to HJ cruciform DNA, conferring on it an open structure. The RuvB hexamer acts as an ATP-dependent pump, pulling dsDNA into and through the RuvAB complex. HJ branch migration allows RuvC to scan DNA until it finds its consensus sequence, where it cleaves and resolves the cruciform DNA. This is Holliday junction branch migration complex subunit RuvA from Orientia tsutsugamushi (strain Ikeda) (Rickettsia tsutsugamushi).